A 1222-amino-acid polypeptide reads, in one-letter code: ATP-dependent helicase/nuclease subunit A (1222 aa).

The region spanning 39-495 is the UvrD-like helicase ATP-binding domain; that stretch reads QKRTAQQIEA…ILLKENFRSQ (457 aa). 60-67 lines the ATP pocket; it reads ASAGSGKT. A UvrD-like helicase C-terminal domain is found at 524-810; that stretch reads QLIAGSHAQT…NLMTIHKSKG (287 aa).

The protein belongs to the helicase family. AddA subfamily. Heterodimer of AddA and AddB/RexB. Mg(2+) serves as cofactor.

The enzyme catalyses Couples ATP hydrolysis with the unwinding of duplex DNA by translocating in the 3'-5' direction.. The catalysed reaction is ATP + H2O = ADP + phosphate + H(+). Its function is as follows. The heterodimer acts as both an ATP-dependent DNA helicase and an ATP-dependent, dual-direction single-stranded exonuclease. Recognizes the chi site generating a DNA molecule suitable for the initiation of homologous recombination. The AddA nuclease domain is required for chi fragment generation; this subunit has the helicase and 3' -&gt; 5' nuclease activities. The polypeptide is ATP-dependent helicase/nuclease subunit A (Streptococcus pyogenes serotype M49 (strain NZ131)).